The primary structure comprises 327 residues: Protein hunchback (327 aa).

3 consecutive C2H2-type zinc fingers follow at residues 1–5, 11–33, and 39–63; these read HMRNH, FQCS…LKSH, and YRCA…KYQH. 3 disordered regions span residues 91 to 121, 143 to 170, and 182 to 290; these read KQKP…HPIF, PPNN…MSPP, and ERPL…EVAS. Basic and acidic residues-rich tracts occupy residues 205–216 and 265–276; these read THREMPTEHGDD and LQHEDEKMRDAD. C2H2-type zinc fingers lie at residues 297–319 and 325–327; these read YTCQ…MGFH and FMC.

This sequence belongs to the hunchback C2H2-type zinc-finger protein family.

It is found in the nucleus. Its function is as follows. Gap class segmentation protein that controls development of head structures. This chain is Protein hunchback (hb), found in Manduca sexta (Tobacco hawkmoth).